Here is a 216-residue protein sequence, read N- to C-terminus: Large ribosomal subunit protein uL3 (216 aa).

The segment at 137–157 is disordered; it reads GASHGAHKNHRKPGSIGGAST.

Belongs to the universal ribosomal protein uL3 family. As to quaternary structure, part of the 50S ribosomal subunit. Forms a cluster with proteins L14 and L19.

One of the primary rRNA binding proteins, it binds directly near the 3'-end of the 23S rRNA, where it nucleates assembly of the 50S subunit. This Paenarthrobacter aurescens (strain TC1) protein is Large ribosomal subunit protein uL3.